Consider the following 435-residue polypeptide: MEEKIFSRPAASATVLVGTQFGDEGKGKLVDYLSDKYDIVVRYQGGANAGHTICFDGKTVVLHLIPSGIFNKDCICVIGNGVVIDPNALMDEIKKVEELGYDVKGRLYISHNAHLIMPYHKRLDSLSESCLSGDNKIGTTGRGIGPSYEDKFARKGIRVVDLLDRDVLKEKLRENLAAKNKLISKVYEQEEIDVEAIIREYEEFDKAIDPYVTNTQLFLNRQIKAGKTILLEGAQGCLLDVDHGTYPFVTSSNPTSGGACTGSGVAPNHVGKIIGVCKAYTTRVGNGDFPTELDDETGEALGRIGCEFGATTGRKRRCGWLDLVALRYSVTVSGVTELALTKLDVLDTFEEIKVCTSYMLDGKEIFDFPTEHQTLSRVQPVYKSLKGWMASNAKAKSFAEMHPNAQAYVNFLEEALEVPVTFISVGPGRDETVFK.

GTP is bound by residues 22–28 and 50–52; these read GDEGKGK and GHT. Catalysis depends on Asp23, which acts as the Proton acceptor. Residues Asp23 and Gly50 each coordinate Mg(2+). IMP is bound by residues 23 to 26, 48 to 51, Thr140, Arg154, Gln235, Thr250, and Arg314; these read DEGK and NAGH. The Proton donor role is filled by His51. 310-316 is a binding site for substrate; it reads ATTGRKR. GTP contacts are provided by residues Arg316, 342–344, and 424–426; these read KLD and SVG.

It belongs to the adenylosuccinate synthetase family. As to quaternary structure, homodimer. Mg(2+) serves as cofactor.

Its subcellular location is the cytoplasm. It carries out the reaction IMP + L-aspartate + GTP = N(6)-(1,2-dicarboxyethyl)-AMP + GDP + phosphate + 2 H(+). Its pathway is purine metabolism; AMP biosynthesis via de novo pathway; AMP from IMP: step 1/2. In terms of biological role, plays an important role in the de novo pathway of purine nucleotide biosynthesis. Catalyzes the first committed step in the biosynthesis of AMP from IMP. The sequence is that of Adenylosuccinate synthetase from Chlorobaculum tepidum (strain ATCC 49652 / DSM 12025 / NBRC 103806 / TLS) (Chlorobium tepidum).